The primary structure comprises 168 residues: MAQNEETTEAVEAEETLTSYTSESGAAEAAAPKKERPALTVAGAAVGRRKEAVARVRVVPGSGKWIINGRELANYFPNKLHQQDVNEPFKILDLDGAYDVIARIHGGGPSGQAGALRLGIARSLNEIDIENNRAILKKAGYLTRDARVIERKKAGLKKARKAQQYSKR.

A compositionally biased stretch (acidic residues) spans 1 to 15 (MAQNEETTEAVEAEE). The segment at 1-34 (MAQNEETTEAVEAEETLTSYTSESGAAEAAAPKK) is disordered.

It belongs to the universal ribosomal protein uS9 family.

The polypeptide is Small ribosomal subunit protein uS9 (Arthrobacter sp. (strain FB24)).